A 171-amino-acid polypeptide reads, in one-letter code: Adenine phosphoribosyltransferase (171 aa).

The protein belongs to the purine/pyrimidine phosphoribosyltransferase family. As to quaternary structure, homodimer.

It is found in the cytoplasm. It catalyses the reaction AMP + diphosphate = 5-phospho-alpha-D-ribose 1-diphosphate + adenine. It participates in purine metabolism; AMP biosynthesis via salvage pathway; AMP from adenine: step 1/1. Functionally, catalyzes a salvage reaction resulting in the formation of AMP, that is energically less costly than de novo synthesis. This chain is Adenine phosphoribosyltransferase, found in Christiangramia forsetii (strain DSM 17595 / CGMCC 1.15422 / KT0803) (Gramella forsetii).